Reading from the N-terminus, the 146-residue chain is Large ribosomal subunit protein uL15 (146 aa).

Residues 1–13 (MKLHELKAAEGSR) show a composition bias toward basic and acidic residues. A disordered region spans residues 1–51 (MKLHELKAAEGSRKVRNRVGRGTSSGNGKTSGRGQKGQKARSGGGVRLGFE). 2 stretches are compositionally biased toward gly residues: residues 23 to 35 (TSSG…GRGQ) and 42 to 51 (SGGGVRLGFE).

It belongs to the universal ribosomal protein uL15 family. Part of the 50S ribosomal subunit.

In terms of biological role, binds to the 23S rRNA. The protein is Large ribosomal subunit protein uL15 of Streptococcus pyogenes serotype M1.